Here is a 1012-residue protein sequence, read N- to C-terminus: DNA polymerase catalytic subunit (1012 aa).

Residues 1–31 (MDFFNPFIDPTRGGPRNTVRQPTPSQSPTVP) form a disordered region. Residues 21 to 31 (QPTPSQSPTVP) are compositionally biased toward low complexity.

Belongs to the DNA polymerase type-B family. As to quaternary structure, forms a complex with the ssDNA-binding protein, the DNA polymerase processivity factor, and the alkaline exonuclease. Interacts with the putative helicase-primase complex subunit; this interaction may coordinate leading and lagging strand DNA synthesis at the replication fork.

The protein resides in the host nucleus. It carries out the reaction DNA(n) + a 2'-deoxyribonucleoside 5'-triphosphate = DNA(n+1) + diphosphate. The catalysed reaction is Endonucleolytic cleavage to 5'-phosphomonoester.. Functionally, replicates viral genomic DNA. The replication complex is composed of six viral proteins: the DNA polymerase, processivity factor, primase, primase-associated factor, helicase, and ssDNA-binding protein. Additionally, the polymerase contains an intrinsic ribonuclease H (RNase H) activity that specifically degrades RNA/DNA heteroduplexes or duplex DNA substrates in the 5' to 3' direction. Therefore, it can catalyze the excision of the RNA primers that initiate the synthesis of Okazaki fragments at a replication fork during viral DNA replication. The chain is DNA polymerase catalytic subunit (ORF9) from Human herpesvirus 8 type P (isolate GK18) (HHV-8).